Reading from the N-terminus, the 134-residue chain is Large ribosomal subunit protein uL22 (134 aa).

It belongs to the universal ribosomal protein uL22 family. As to quaternary structure, part of the 50S ribosomal subunit.

In terms of biological role, this protein binds specifically to 23S rRNA; its binding is stimulated by other ribosomal proteins, e.g. L4, L17, and L20. It is important during the early stages of 50S assembly. It makes multiple contacts with different domains of the 23S rRNA in the assembled 50S subunit and ribosome. The globular domain of the protein is located near the polypeptide exit tunnel on the outside of the subunit, while an extended beta-hairpin is found that lines the wall of the exit tunnel in the center of the 70S ribosome. This chain is Large ribosomal subunit protein uL22, found in Porphyromonas gingivalis (strain ATCC 33277 / DSM 20709 / CIP 103683 / JCM 12257 / NCTC 11834 / 2561).